The primary structure comprises 138 residues: MRTLWIMAVLLVGVEGNLWQFGKMMNYVMGQSVVYKYFYYGCYCGWGGIGQPRDATDRCCFVHDCCYGKVTGCDPKTDSYTYSKENGDVVCGGDDPCKKQICECDRVAATCFRDNKDTYDMKYWLYGAKNCQEESEPC.

An N-terminal signal peptide occupies residues 1–16 (MRTLWIMAVLLVGVEG). Disulfide bonds link Cys42–Cys131, Cys44–Cys60, Cys59–Cys111, Cys65–Cys138, Cys66–Cys104, Cys73–Cys97, and Cys91–Cys102. Tyr43, Gly45, and Gly47 together coordinate Ca(2+). Residue His63 is part of the active site. Ca(2+) is bound at residue Asp64. Asp105 is an active-site residue.

It depends on Ca(2+) as a cofactor. In terms of tissue distribution, expressed by the venom gland.

The protein resides in the secreted. The catalysed reaction is a 1,2-diacyl-sn-glycero-3-phosphocholine + H2O = a 1-acyl-sn-glycero-3-phosphocholine + a fatty acid + H(+). Snake venom phospholipase A2 (PLA2) that induces edema in mice, produces neuromuscular blockade in chick biventer cervicis, increases CK release and produces myonecrosis. PLA2 catalyzes the calcium-dependent hydrolysis of the 2-acyl groups in 3-sn-phosphoglycerides. This Bothrops insularis (Golden lancehead) protein is Acidic phospholipase A2 BITP01A.